Consider the following 217-residue polypeptide: Large ribosomal subunit protein bL25 (217 aa).

The protein belongs to the bacterial ribosomal protein bL25 family. CTC subfamily. Part of the 50S ribosomal subunit; part of the 5S rRNA/L5/L18/L25 subcomplex. Contacts the 5S rRNA. Binds to the 5S rRNA independently of L5 and L18.

Its function is as follows. This is one of the proteins that binds to the 5S RNA in the ribosome where it forms part of the central protuberance. The chain is Large ribosomal subunit protein bL25 from Methylobacterium sp. (strain 4-46).